The sequence spans 159 residues: Ribosomal RNA large subunit methyltransferase H (159 aa).

S-adenosyl-L-methionine contacts are provided by residues glycine 108 and 127–132; that span reads FSKMTF.

This sequence belongs to the RNA methyltransferase RlmH family. In terms of assembly, homodimer.

The protein localises to the cytoplasm. The catalysed reaction is pseudouridine(1915) in 23S rRNA + S-adenosyl-L-methionine = N(3)-methylpseudouridine(1915) in 23S rRNA + S-adenosyl-L-homocysteine + H(+). In terms of biological role, specifically methylates the pseudouridine at position 1915 (m3Psi1915) in 23S rRNA. This chain is Ribosomal RNA large subunit methyltransferase H, found in Clostridium acetobutylicum (strain ATCC 824 / DSM 792 / JCM 1419 / IAM 19013 / LMG 5710 / NBRC 13948 / NRRL B-527 / VKM B-1787 / 2291 / W).